A 413-amino-acid polypeptide reads, in one-letter code: Clusterin-associated protein 1 (413 aa).

Positions 185–308 (MRIAIKDLLA…KEEEKRLLKS (124 aa)) form a coiled coil. The tract at residues 303–413 (KRLLKSGSND…EPLDESDNDF (111 aa)) is disordered. 2 stretches are compositionally biased toward acidic residues: residues 312–328 (DDSD…DSEL) and 360–388 (DSDE…EDES). 3 positions are modified to phosphoserine: serine 314, serine 324, and serine 326. Serine 409 is modified (phosphoserine).

It belongs to the CLUAP1 family. As to quaternary structure, interacts with CLU/clusterin. Interacts with UBXN10; the interaction is direct. As to expression, expressed in all tissues tested including heart, kidney, skeletal muscle, eye, liver, ovary, oviduct, testes, lung and brain. Elevated levels in multiciliated cells such as the bronchioles of the lungs, ependymal cells of the brain and cells with a single primary cilia of heart and kidney.

The protein localises to the cell projection. It localises to the cilium. Its subcellular location is the nucleus. Required for cilia biogenesis. Appears to function within the multiple intraflagellar transport complex B (IFT-B). Key regulator of hedgehog signaling. This Mus musculus (Mouse) protein is Clusterin-associated protein 1 (Cluap1).